A 196-amino-acid polypeptide reads, in one-letter code: UPF0340 protein TT_C0214 (196 aa).

This sequence belongs to the UPF0340 family.

This Thermus thermophilus (strain ATCC BAA-163 / DSM 7039 / HB27) protein is UPF0340 protein TT_C0214.